A 319-amino-acid polypeptide reads, in one-letter code: Pre T-cell antigen receptor alpha (319 aa).

An N-terminal signal peptide occupies residues 1-16 (MAESWLLLLLALGCPA). The Extracellular segment spans residues 17 to 160 (LPTEVTTLLR…LRGTRALVLR (144 aa)). A disulfide bridge connects residues cysteine 58 and cysteine 118. Residue asparagine 78 is glycosylated (N-linked (GlcNAc...) asparagine). A helical membrane pass occupies residues 161-181 (LGALRLLLFKLLLLDVLLTCG). Residues 182–319 (RLHAPPAARG…PPADPSFPGG (138 aa)) lie on the Cytoplasmic side of the membrane. A compositionally biased stretch (low complexity) spans 189-207 (ARGDPAGASGPGAPSLPAP). Residues 189–293 (ARGDPAGASG…VLRAWSSGPS (105 aa)) are disordered. Residues 260 to 271 (RRRRVHTRRPRR) show a composition bias toward basic residues.

As to quaternary structure, heterodimer with TCRB; disulfide linked. This heterodimer assembles with CD3 proteins into a signaling-competent pre-T-cell receptor complex. Interacts with RHBDD1.

The protein resides in the membrane. Its subcellular location is the cell membrane. Component of the pre-T-cell receptor complex (composed of PTCRA, TCRB and the CD3 complex) that has a crucial role in early T-cell development, particularly alpha-beta T cell differentiation. The protein is Pre T-cell antigen receptor alpha (PTCRA) of Bos taurus (Bovine).